The chain runs to 445 residues: N-succinylarginine dihydrolase (445 aa).

Substrate-binding positions include 19-28 (AGLSFGNVAS), Asn110, and 137-138 (HR). Glu174 is an active-site residue. Arg214 is a binding site for substrate. Residue His250 is part of the active site. Residues Asp252 and Asn363 each contribute to the substrate site. Residue Cys369 is the Nucleophile of the active site.

This sequence belongs to the succinylarginine dihydrolase family. In terms of assembly, homodimer.

The enzyme catalyses N(2)-succinyl-L-arginine + 2 H2O + 2 H(+) = N(2)-succinyl-L-ornithine + 2 NH4(+) + CO2. The protein operates within amino-acid degradation; L-arginine degradation via AST pathway; L-glutamate and succinate from L-arginine: step 2/5. Its function is as follows. Catalyzes the hydrolysis of N(2)-succinylarginine into N(2)-succinylornithine, ammonia and CO(2). The chain is N-succinylarginine dihydrolase from Shewanella sediminis (strain HAW-EB3).